The chain runs to 447 residues: Cysteine--tRNA ligase (447 aa).

Position 28 (cysteine 28) interacts with Zn(2+). Positions proline 30–asparagine 40 match the 'HIGH' region motif. Zn(2+) contacts are provided by cysteine 211, histidine 236, and glutamate 240. A 'KMSKS' region motif is present at residues lysine 268–serine 272. Lysine 271 is an ATP binding site.

This sequence belongs to the class-I aminoacyl-tRNA synthetase family. In terms of assembly, monomer. The cofactor is Zn(2+).

It is found in the cytoplasm. It catalyses the reaction tRNA(Cys) + L-cysteine + ATP = L-cysteinyl-tRNA(Cys) + AMP + diphosphate. The sequence is that of Cysteine--tRNA ligase from Streptococcus agalactiae serotype III (strain NEM316).